A 98-amino-acid chain; its full sequence is MPRIVNPLDEMLFKEVLKEQQRIRVYVERARYGKLKTIIEGIDEKEFDLEDIAKKLKAKLACGGTAKNGRIELQGDHRDRVKKLLAELGFSEELIEVE.

This sequence belongs to the SUI1 family.

This Thermococcus kodakarensis (strain ATCC BAA-918 / JCM 12380 / KOD1) (Pyrococcus kodakaraensis (strain KOD1)) protein is Protein translation factor SUI1 homolog.